We begin with the raw amino-acid sequence, 349 residues long: 3-dehydroquinate synthase (349 aa).

NAD(+) contacts are provided by residues 63 to 68, 97 to 101, 121 to 122, lysine 134, lysine 143, and 161 to 164; these read DGEDYK, GVIGD, TT, and FLQT. 3 residues coordinate Zn(2+): glutamate 176, histidine 235, and histidine 252.

The protein belongs to the sugar phosphate cyclases superfamily. Dehydroquinate synthase family. Requires Co(2+) as cofactor. Zn(2+) serves as cofactor. It depends on NAD(+) as a cofactor.

It localises to the cytoplasm. The enzyme catalyses 7-phospho-2-dehydro-3-deoxy-D-arabino-heptonate = 3-dehydroquinate + phosphate. It participates in metabolic intermediate biosynthesis; chorismate biosynthesis; chorismate from D-erythrose 4-phosphate and phosphoenolpyruvate: step 2/7. In terms of biological role, catalyzes the conversion of 3-deoxy-D-arabino-heptulosonate 7-phosphate (DAHP) to dehydroquinate (DHQ). In Nitratiruptor sp. (strain SB155-2), this protein is 3-dehydroquinate synthase.